Reading from the N-terminus, the 445-residue chain is Coronin-A (445 aa).

WD repeat units follow at residues 77 to 117, 127 to 167, 170 to 209, and 259 to 299; these read GHKS…LTDS, GHKR…NLTT, GHSDMITSCEWNHNGSQIVTTCKDKKARVFDPRTNSIVNE, and DSAS…PYIH. Residues 410-444 are a coiled coil; sequence KNEKELREEYEKLKIRVAYLESEIVKKDAKIKELT.

It belongs to the WD repeat coronin family. Binds to F-actin.

It localises to the cell surface. Required for normal motility. Participates in cytokinesis. In Dictyostelium discoideum (Social amoeba), this protein is Coronin-A (corA).